The sequence spans 499 residues: GTPase Der (499 aa).

The EngA-type G 1 domain maps to 3-166; sequence PVIALVGRPN…QALGIFPKDN (164 aa). GTP contacts are provided by residues 9-16, 56-60, and 118-121; these read GRPNVGKS, DTGGI, and NKVD. Residues 166–199 form a disordered region; it reads NADENAEGEEGGELAEGEEVVAEGQEPKRIPGPS. Over residues 168–186 the composition is skewed to acidic residues; the sequence is DENAEGEEGGELAEGEEVV. The span at 190–199 shows a compositional bias: basic and acidic residues; that stretch reads QEPKRIPGPS. Residues 204 to 377 enclose the EngA-type G 2 domain; sequence IKIAIIGRPN…SVQAAFKSAI (174 aa). GTP contacts are provided by residues 210-217, 257-261, and 322-325; these read GRPNVGKS, DTAGV, and NKWD. Positions 378 to 462 constitute a KH-like domain; that stretch reads TRWPTSRLTQ…PIRIEYKGGD (85 aa). The segment covering 459–472 has biased composition (basic and acidic residues); that stretch reads KGGDNPYEGKKNTL. Residues 459–499 are disordered; it reads KGGDNPYEGKKNTLTDRQVNKKRRLMSHHKKAEKKRRDKKR. Basic residues predominate over residues 478–499; that stretch reads NKKRRLMSHHKKAEKKRRDKKR.

The protein belongs to the TRAFAC class TrmE-Era-EngA-EngB-Septin-like GTPase superfamily. EngA (Der) GTPase family. As to quaternary structure, associates with the 50S ribosomal subunit.

Functionally, GTPase that plays an essential role in the late steps of ribosome biogenesis. The protein is GTPase Der of Stutzerimonas stutzeri (strain A1501) (Pseudomonas stutzeri).